The sequence spans 506 residues: 2,3-bisphosphoglycerate-independent phosphoglycerate mutase (506 aa).

Residues D12 and S63 each contribute to the Mn(2+) site. The active-site Phosphoserine intermediate is the S63. Residues H122, 151 to 152, R182, R188, 253 to 256, and K323 contribute to the substrate site; these read RD and RADR. Mn(2+) contacts are provided by D390, H394, D432, H433, and H451.

This sequence belongs to the BPG-independent phosphoglycerate mutase family. In terms of assembly, monomer. Mn(2+) serves as cofactor.

It carries out the reaction (2R)-2-phosphoglycerate = (2R)-3-phosphoglycerate. The protein operates within carbohydrate degradation; glycolysis; pyruvate from D-glyceraldehyde 3-phosphate: step 3/5. Functionally, catalyzes the interconversion of 2-phosphoglycerate and 3-phosphoglycerate. The chain is 2,3-bisphosphoglycerate-independent phosphoglycerate mutase from Wolbachia pipientis wMel.